Reading from the N-terminus, the 416-residue chain is GTPase Obg (416 aa).

One can recognise an Obg domain in the interval 1–157; it reads MFQDVLVITV…RRLRLELMLI (157 aa). 2 disordered regions span residues 25 to 44 and 62 to 82; these read EKFVPKGGPDGGDGGRGGSV and TYKAEDGEHGRGSQQHGRGGE. Positions 32-42 are enriched in gly residues; it reads GPDGGDGGRGG. The segment covering 63–72 has biased composition (basic and acidic residues); that stretch reads YKAEDGEHGR. An OBG-type G domain is found at 158–324; that stretch reads ADVGLVGYPN…LKEALHALVR (167 aa). GTP is bound by residues 164 to 171, 189 to 193, 211 to 214, 277 to 280, and 305 to 307; these read GYPNAGKS, FTTLS, DIPG, NKVD, and SAL. Mg(2+) is bound by residues Ser171 and Thr191. The region spanning 336–414 is the OCT domain; the sequence is PRKEVQAGVE…IGGLEFEYIP (79 aa).

The protein belongs to the TRAFAC class OBG-HflX-like GTPase superfamily. OBG GTPase family. As to quaternary structure, monomer. Mg(2+) is required as a cofactor.

It is found in the cytoplasm. Its function is as follows. An essential GTPase which binds GTP, GDP and possibly (p)ppGpp with moderate affinity, with high nucleotide exchange rates and a fairly low GTP hydrolysis rate. Plays a role in control of the cell cycle, stress response, ribosome biogenesis and in those bacteria that undergo differentiation, in morphogenesis control. The sequence is that of GTPase Obg from Thermus thermophilus (strain ATCC BAA-163 / DSM 7039 / HB27).